Reading from the N-terminus, the 385-residue chain is WD repeat-containing protein RUP1 (385 aa).

WD repeat units follow at residues 69–108 (TGSD…ESRD), 119–160 (CTPA…PVSE), 163–205 (EHGG…TLEE), 210–250 (GGGA…DPLI), 254–292 (GHTK…RVVR), 298–337 (VNSR…PVWV), and 348–385 (SDRR…GKQS).

In terms of assembly, interacts with UVR8. Interacts directly with DHU1.

The protein resides in the nucleus. Its subcellular location is the cytoplasm. It is found in the cytosol. Its function is as follows. Functions in association with RUP2 as repressor of UV-B-induced photomorphogenesis mediated by UVR8 and HY5, likely in coordination with DHU1. Plays a crucial negative feedback regulatory role downstream of UVR8-COP1 to inhibit UVR8 function, balance UV-B-specific responses and ensure normal plant growth. Is involved in the regulation of photoperiodic flowering and vegetative development. The polypeptide is WD repeat-containing protein RUP1 (Arabidopsis thaliana (Mouse-ear cress)).